A 338-amino-acid chain; its full sequence is HLA class I histocompatibility antigen, alpha chain G (338 aa).

An N-terminal signal peptide occupies residues 1–24; the sequence is MVVMAPRTLFLLLSGALTLTETWA. Residues 3–11 are VL9 epitope; the sequence is VMAPRTLFL. The interval 25 to 114 is alpha-1; the sequence is GSHSMRYFSA…LRGYYNQSEA (90 aa). Residues 25–308 lie on the Extracellular side of the membrane; the sequence is GSHSMRYFSA…KQSSLPTIPI (284 aa). The a peptide antigen site is built by Tyr31, His94, Asn101, and Tyr108. Asn110 carries N-linked (GlcNAc...) asparagine glycosylation. Residues 115–206 form an alpha-2 region; it reads SSHTLQWMIG…ENGKEMLQRA (92 aa). Cys125 and Cys188 are oxidised to a cystine. A peptide antigen-binding residues include Ser167, Lys170, Gln179, Arg180, Tyr183, and Tyr195. The tract at residues 207 to 298 is alpha-3; sequence DPPKTHVTHH…GLPEPLMLRW (92 aa). Residues 209 to 299 enclose the Ig-like C1-type domain; that stretch reads PKTHVTHHPV…LPEPLMLRWK (91 aa). A disulfide bond links Cys227 and Cys283. Positions 299–308 are connecting peptide; the sequence is KQSSLPTIPI. A helical transmembrane segment spans residues 309 to 332; sequence MGIVAGLVVLAAVVTGAAVAAVLW. Over 333–338 the chain is Cytoplasmic; sequence RKKSSD. The ER-retrieval signal signature appears at 334 to 336; the sequence is KKS.

It belongs to the MHC class I family. Forms a heterotrimer with B2M and a self-peptide (peptide-bound HLA-G-B2M). HLA-G-B2M complex interacts with components of the antigen processing machinery TAPBP and TAP1-TAP2 complex; this interaction is required for loading of high affinity peptides and heterotrimer translocation to the cell surface. Interacts with CALCR; this interaction is required for appropriate folding. Interacts with COPB1; this interaction mediates the endoplasmic reticulum (ER) retrieval of HLA-G-B2M complexes that bind low affinity peptides. On the cell surface, peptide-bound HLA-G-B2M molecules (referred to as monomers) can form disulfide-linked homomultimers, homodimers and homotrimers. Interacts with KIR2DL4; this interaction is direct. Interacts with LILRB1 and LILRB2 receptors; this interaction is direct. Interacts with CD160; this interactions is direct. Interacts with CD8A homodimer; this interaction is direct and might down-regulate T cell receptor signaling. Isoform 2: Forms a non-disulfide-linked homodimer and interacts with LILRB2. In terms of processing, N-glycosylated. Post-translationally, produced by proteolytic cleavage at the cell surface (shedding) by matrix metalloproteinase MMP2. Expressed in adult eye. Expressed in immune cell subsets including monocytes, myeloid and plasmacytoid dendritic cells and regulatory T cells (Tr1)(at protein level). Secreted by follicular dendritic cell and follicular helper T cells. As to expression, detected in physiological fluids including amniotic fluid and serum. In terms of tissue distribution, expressed in placenta, amniotic membrane, skin, cord blood and peripheral blood mononuclear cells.

It localises to the cell membrane. Its subcellular location is the endoplasmic reticulum membrane. It is found in the early endosome membrane. The protein resides in the secreted. The protein localises to the early endosome. It localises to the cell projection. Its subcellular location is the filopodium membrane. Functionally, non-classical major histocompatibility class Ib molecule involved in immune regulatory processes at the maternal-fetal interface. In complex with B2M/beta-2 microglobulin binds a limited repertoire of nonamer self-peptides derived from intracellular proteins including histones and ribosomal proteins. Peptide-bound HLA-G-B2M complex acts as a ligand for inhibitory/activating KIR2DL4, LILRB1 and LILRB2 receptors on uterine immune cells to promote fetal development while maintaining maternal-fetal tolerance. Upon interaction with KIR2DL4 and LILRB1 receptors on decidual NK cells, it triggers NK cell senescence-associated secretory phenotype as a molecular switch to promote vascular remodeling and fetal growth in early pregnancy. Through interaction with KIR2DL4 receptor on decidual macrophages induces pro-inflammatory cytokine production mainly associated with tissue remodeling. Through interaction with LILRB2 receptor triggers differentiation of type 1 regulatory T cells and myeloid-derived suppressor cells, both of which actively maintain maternal-fetal tolerance. May play a role in balancing tolerance and antiviral-immunity at maternal-fetal interface by keeping in check the effector functions of NK, CD8+ T cells and B cells. Reprograms B cells toward an immune suppressive phenotype via LILRB1. May induce immune activation/suppression via intercellular membrane transfer (trogocytosis), likely enabling interaction with KIR2DL4, which resides mostly in endosomes. Through interaction with the inhibitory receptor CD160 on endothelial cells may control angiogenesis in immune privileged sites. Likely does not bind B2M and presents peptides. Negatively regulates NK cell- and CD8+ T cell-mediated cytotoxicity. In terms of biological role, non-classical major histocompatibility class Ib molecule involved in immune regulatory processes at the maternal-fetal interface. In complex with B2M/beta-2 microglobulin binds a limited repertoire of nonamer self-peptides derived from intracellular proteins including histones and ribosomal proteins. Peptide-bound HLA-G-B2M complex acts as a ligand for inhibitory/activating KIR2DL4, LILRB1 and LILRB2 receptors on uterine immune cells to promote fetal development while maintaining maternal-fetal tolerance. Upon interaction with KIR2DL4 and LILRB1 receptors on decidual NK cells, it triggers NK cell senescence-associated secretory phenotype as a molecular switch to promote vascular remodeling and fetal growth in early pregnancy. Through interaction with KIR2DL4 receptor on decidual macrophages induces pro-inflammatory cytokine production mainly associated with tissue remodeling. Through interaction with LILRB2 receptor triggers differentiation of type 1 regulatory T cells and myeloid-derived suppressor cells, both of which actively maintain maternal-fetal tolerance. Reprograms B cells toward an immune suppressive phenotype via LILRB1. Its function is as follows. Likely does not bind B2M and presents peptides. The sequence is that of HLA class I histocompatibility antigen, alpha chain G from Homo sapiens (Human).